The chain runs to 411 residues: Dual-specificity RNA methyltransferase RlmN (411 aa).

E125 serves as the catalytic Proton acceptor. The Radical SAM core domain occupies 131-380 (EEGRGTLCIS…IRTPRGRDIL (250 aa)). The cysteines at positions 138 and 383 are disulfide-linked. [4Fe-4S] cluster contacts are provided by C145, C149, and C152. S-adenosyl-L-methionine-binding positions include 209-210 (GE), S241, 263-265 (SLH), and N340. C383 acts as the S-methylcysteine intermediate in catalysis.

It belongs to the radical SAM superfamily. RlmN family. It depends on [4Fe-4S] cluster as a cofactor.

The protein resides in the cytoplasm. It carries out the reaction adenosine(2503) in 23S rRNA + 2 reduced [2Fe-2S]-[ferredoxin] + 2 S-adenosyl-L-methionine = 2-methyladenosine(2503) in 23S rRNA + 5'-deoxyadenosine + L-methionine + 2 oxidized [2Fe-2S]-[ferredoxin] + S-adenosyl-L-homocysteine. The enzyme catalyses adenosine(37) in tRNA + 2 reduced [2Fe-2S]-[ferredoxin] + 2 S-adenosyl-L-methionine = 2-methyladenosine(37) in tRNA + 5'-deoxyadenosine + L-methionine + 2 oxidized [2Fe-2S]-[ferredoxin] + S-adenosyl-L-homocysteine. Specifically methylates position 2 of adenine 2503 in 23S rRNA and position 2 of adenine 37 in tRNAs. m2A2503 modification seems to play a crucial role in the proofreading step occurring at the peptidyl transferase center and thus would serve to optimize ribosomal fidelity. This is Dual-specificity RNA methyltransferase RlmN from Brucella canis (strain ATCC 23365 / NCTC 10854 / RM-666).